Consider the following 393-residue polypeptide: MDDSTPYPVPQELYIPQKMKAFMAEPQGCALVAALEGQFQCSIVVINDHLSVISSADGVAVDINQIEKILRDVWRKRDVQIMIREAALNASCTHICHTLLPRAYCAVVLFFSSDLQRRSRCTDIIIDQFTGKVTMFGTEQAVNKAREMMIECLTEHFGLLEMNIPPTQRTTRMGYTNSYNPEIRTHLPPNSFLNSVFPMGEPNAILTSTPPTTSIMDEPLLSASLEKHLLFPSDFSVPPPRLSPVQELPLTPPKTCVVEKIKQWIPTTEVGKILGNRAAVKKHIERQFNCVITVHTEVQSSFGATPVEIVAQNKEQCQEARNAVMSLMQSHQDKPASNPPDSGFSTPGSPFTSDSSSTTPEKRGNSRQYHRGSFRDQPKVMLALTPRKLSPSD.

Residues 12–76 (ELYIPQKMKA…EKILRDVWRK (65 aa)) form a KH 1-like region. The tract at residues 79–157 (VQIMIREAAL…MMIECLTEHF (79 aa)) is KH 2-like. Positions 259–322 (EKIKQWIPTT…NKEQCQEARN (64 aa)) are KH 3-like. Positions 328 to 393 (MQSHQDKPAS…LTPRKLSPSD (66 aa)) are disordered. Positions 345-359 (STPGSPFTSDSSSTT) are enriched in low complexity.

In terms of assembly, may interact with wago-4. In terms of tissue distribution, expressed throughout the germline and in oocytes (at protein level).

The protein resides in the cytoplasm. Its subcellular location is the perinuclear region. In terms of biological role, RNA-binding protein which binds to its own mRNA and target mRNAs to negatively regulate gene expression to modulate apoptosis and differentiation in the germline. Negatively regulates the expression of the argonaute protein wago-4, and may thus play a role in RNA-mediated gene silencing (RNAi) in the germline. This is Messenger RNA-binding inhibitor of apoptosis 1 from Caenorhabditis elegans.